The chain runs to 536 residues: Phosphoenolpyruvate carboxykinase (ATP) (536 aa).

Substrate contacts are provided by Arg61, Tyr195, and Lys201. ATP is bound by residues Lys201, His220, and 236–244; that span reads GLSGTGKTT. 2 residues coordinate Mn(2+): Lys201 and His220. A Mn(2+)-binding site is contributed by Asp257. The ATP site is built by Glu285, Arg322, and Thr447. Arg322 contributes to the substrate binding site.

This sequence belongs to the phosphoenolpyruvate carboxykinase (ATP) family. It depends on Mn(2+) as a cofactor.

It localises to the cytoplasm. The enzyme catalyses oxaloacetate + ATP = phosphoenolpyruvate + ADP + CO2. Its pathway is carbohydrate biosynthesis; gluconeogenesis. Functionally, involved in the gluconeogenesis. Catalyzes the conversion of oxaloacetate (OAA) to phosphoenolpyruvate (PEP) through direct phosphoryl transfer between the nucleoside triphosphate and OAA. This is Phosphoenolpyruvate carboxykinase (ATP) from Rhizobium johnstonii (strain DSM 114642 / LMG 32736 / 3841) (Rhizobium leguminosarum bv. viciae).